The primary structure comprises 511 residues: Cobyric acid synthase (511 aa).

Residues 251–443 (LLDIAIICLP…IHGIFDNDVF (193 aa)) form the GATase cobBQ-type domain. Cysteine 332 (nucleophile) is an active-site residue. The active site involves histidine 435.

Belongs to the CobB/CobQ family. CobQ subfamily.

It participates in cofactor biosynthesis; adenosylcobalamin biosynthesis. Its function is as follows. Catalyzes amidations at positions B, D, E, and G on adenosylcobyrinic A,C-diamide. NH(2) groups are provided by glutamine, and one molecule of ATP is hydrogenolyzed for each amidation. The protein is Cobyric acid synthase of Listeria monocytogenes serotype 4b (strain CLIP80459).